The sequence spans 384 residues: GDSL esterase/lipase ENOD8 (384 aa).

Residues M1–A31 form the signal peptide. S46 functions as the Nucleophile in the catalytic mechanism. 5 N-linked (GlcNAc...) asparagine glycosylation sites follow: N105, N191, N198, N276, and N330. Catalysis depends on residues D349 and H352.

Belongs to the 'GDSL' lipolytic enzyme family. As to expression, expressed in root nodules (at protein level).

The protein resides in the symbiosome. Has lipase and esterase activities. Probably involved in root nodule physiology. The chain is GDSL esterase/lipase ENOD8 from Medicago truncatula (Barrel medic).